The chain runs to 349 residues: TEGPYFYIPMSNATGVVRSPYEYPQYYLVYPAAFAVLGAYMFFLIIFGFPVNFLTLYVTIEHKKLRTPLNYILLNLAVADLFMVIGGFTTTIYTSMHGYFVLGRLGCNLEGFSATLGGMISLWSLVVLAVERWVVVCKPMSNFRFGENHAIMGVTLTWAMGLACTVPPLVGWSRYIPEGMQCSCGIDYYTRAEGFNNESFVLYMFVCHFSFPLVVIFFCYGRLLCAVKEAAAAQQESETTQRAEREVTRMVILMVIGFLVCWLPYASVAWYIFTHQGSEFGPLFMTIPAFFAKSSAIYNPVIYICLNKQFRQCMLTTLFCGKNPFEEEEGASSTKTEASSASSSSVSPA.

The Extracellular segment spans residues 1 to 33 (TEGPYFYIPMSNATGVVRSPYEYPQYYLVYPAA). N-linked (GlcNAc...) asparagine glycosylation is present at Asn12. A helical transmembrane segment spans residues 34 to 58 (FAVLGAYMFFLIIFGFPVNFLTLYV). Residues 59 to 70 (TIEHKKLRTPLN) are Cytoplasmic-facing. A helical membrane pass occupies residues 71 to 93 (YILLNLAVADLFMVIGGFTTTIY). Topologically, residues 94 to 107 (TSMHGYFVLGRLGC) are extracellular. A disulfide bridge connects residues Cys107 and Cys184. A helical membrane pass occupies residues 108 to 130 (NLEGFSATLGGMISLWSLVVLAV). A 'Ionic lock' involved in activated form stabilization motif is present at residues 131–133 (ERW). At 131–149 (ERWVVVCKPMSNFRFGENH) the chain is on the cytoplasmic side. A helical membrane pass occupies residues 150 to 170 (AIMGVTLTWAMGLACTVPPLV). Residues 171 to 199 (GWSRYIPEGMQCSCGIDYYTRAEGFNNES) are Extracellular-facing. A glycan (N-linked (GlcNAc...) asparagine) is linked at Asn197. The chain crosses the membrane as a helical span at residues 200 to 221 (FVLYMFVCHFSFPLVVIFFCYG). Residues 222-249 (RLLCAVKEAAAAQQESETTQRAEREVTR) are Cytoplasmic-facing. Residues 250 to 271 (MVILMVIGFLVCWLPYASVAWY) form a helical membrane-spanning segment. Residues 272–283 (IFTHQGSEFGPL) are Extracellular-facing. Residues 284-305 (FMTIPAFFAKSSAIYNPVIYIC) form a helical membrane-spanning segment. An N6-(retinylidene)lysine modification is found at Lys293. Topologically, residues 306–349 (LNKQFRQCMLTTLFCGKNPFEEEEGASSTKTEASSASSSSVSPA) are cytoplasmic. Cys320 carries the S-palmitoyl cysteine lipid modification. The segment at 326-349 (EEEEGASSTKTEASSASSSSVSPA) is disordered. Low complexity predominate over residues 331–349 (ASSTKTEASSASSSSVSPA).

It belongs to the G-protein coupled receptor 1 family. Opsin subfamily. In terms of processing, phosphorylated on some or all of the serine and threonine residues present in the C-terminal region. Contains one covalently linked retinal chromophore.

It localises to the membrane. It is found in the cell projection. Its subcellular location is the cilium. The protein resides in the photoreceptor outer segment. Its function is as follows. Photoreceptor required for image-forming vision at low light intensity. While most salt water fish species use retinal as chromophore, most freshwater fish use 3-dehydroretinal, or a mixture of retinal and 3-dehydroretinal. Light-induced isomerization of 11-cis to all-trans retinal triggers a conformational change that activates signaling via G-proteins. Subsequent receptor phosphorylation mediates displacement of the bound G-protein alpha subunit by arrestin and terminates signaling. The chain is Rhodopsin (rho) from Myripristis berndti (Bigscale soldierfish).